A 355-amino-acid chain; its full sequence is S-methyl-5'-thioadenosine phosphorylase (355 aa).

Residues threonine 45, 91–92 (RH), and 124–125 (SA) contribute to the phosphate site. Methionine 226 is a substrate binding site. Serine 227 contacts phosphate. 250-252 (DYD) serves as a coordination point for substrate.

This sequence belongs to the PNP/MTAP phosphorylase family. MTAP subfamily. In terms of assembly, homotrimer.

The protein localises to the cytoplasm. Its subcellular location is the nucleus. It catalyses the reaction S-methyl-5'-thioadenosine + phosphate = 5-(methylsulfanyl)-alpha-D-ribose 1-phosphate + adenine. It participates in amino-acid biosynthesis; L-methionine biosynthesis via salvage pathway; S-methyl-5-thio-alpha-D-ribose 1-phosphate from S-methyl-5'-thioadenosine (phosphorylase route): step 1/1. Functionally, catalyzes the reversible phosphorylation of S-methyl-5'-thioadenosine (MTA) to adenine and 5-methylthioribose-1-phosphate. Involved in the breakdown of MTA, a major by-product of polyamine biosynthesis. Responsible for the first step in the methionine salvage pathway after MTA has been generated from S-adenosylmethionine. Has broad substrate specificity with 6-aminopurine nucleosides as preferred substrates. This Emericella nidulans (strain FGSC A4 / ATCC 38163 / CBS 112.46 / NRRL 194 / M139) (Aspergillus nidulans) protein is S-methyl-5'-thioadenosine phosphorylase.